The chain runs to 109 residues: ATPase inhibitor mai-2, mitochondrial (109 aa).

Disordered regions lie at residues 18-39 and 73-109; these read FSAGGHGDGAGRGGGSGGSIRD and EEVKHHEGQLENHKKVLERHQQRISEIEAQERALGKE. The segment covering 21-35 has biased composition (gly residues); that stretch reads GGHGDGAGRGGGSGG. Residues 55-109 adopt a coiled-coil conformation; sequence YFYKKQKAQLQELREHIQEEVKHHEGQLENHKKVLERHQQRISEIEAQERALGKE.

Belongs to the ATPase inhibitor family.

The protein resides in the mitochondrion. Functionally, thought to be a regulatory component of the ATP-synthesizing complex in the mitochondria. Activity is pH dependent. This is ATPase inhibitor mai-2, mitochondrial (mai-2) from Caenorhabditis elegans.